Here is a 242-residue protein sequence, read N- to C-terminus: Mannose-P-dolichol utilization defect 1 protein homolog (242 aa).

The PQ-loop 1 domain occupies 37-95; the sequence is LSRGLGFAITLGSILLFVPQILKIQAARSAQGISAASQLLALVGAIGTASYSYRSGFVF. Helical transmembrane passes span 40 to 60, 68 to 88, 98 to 118, 120 to 140, 148 to 168, 180 to 200, and 207 to 227; these read GLGFAITLGSILLFVPQILKI, GISAASQLLALVGAIGTASYS, WGDSFFVAVQLVIIILQIFLF, GQTMLSVGFLGIVSAVAYGVV, TLTAVQTAGIPIVVVSKLLQI, LSLISVFLQFAGTLARVFTSV, and LLIVSYSTAAVLNGLIFAQFF. The region spanning 152 to 202 is the PQ-loop 2 domain; the sequence is VQTAGIPIVVVSKLLQISQNYRAQSTGQLSLISVFLQFAGTLARVFTSVQD.

Belongs to the MPDU1 (TC 2.A.43.3) family.

The protein localises to the membrane. In Caenorhabditis elegans, this protein is Mannose-P-dolichol utilization defect 1 protein homolog.